Consider the following 291-residue polypeptide: Acetyl-coenzyme A carboxylase carboxyl transferase subunit beta (291 aa).

The region spanning 29 to 291 (IMTKCPQCKK…TGGEREWLEN (263 aa)) is the CoA carboxyltransferase N-terminal domain. Residues C33, C36, C52, and C55 each contribute to the Zn(2+) site. Residues 33-55 (CPQCKKIMLTKELDKNLRVCMNC) form a C4-type zinc finger.

It belongs to the AccD/PCCB family. In terms of assembly, acetyl-CoA carboxylase is a heterohexamer composed of biotin carboxyl carrier protein (AccB), biotin carboxylase (AccC) and two subunits each of ACCase subunit alpha (AccA) and ACCase subunit beta (AccD). Requires Zn(2+) as cofactor.

The protein resides in the cytoplasm. It carries out the reaction N(6)-carboxybiotinyl-L-lysyl-[protein] + acetyl-CoA = N(6)-biotinyl-L-lysyl-[protein] + malonyl-CoA. It participates in lipid metabolism; malonyl-CoA biosynthesis; malonyl-CoA from acetyl-CoA: step 1/1. Component of the acetyl coenzyme A carboxylase (ACC) complex. Biotin carboxylase (BC) catalyzes the carboxylation of biotin on its carrier protein (BCCP) and then the CO(2) group is transferred by the transcarboxylase to acetyl-CoA to form malonyl-CoA. In Bacillus pumilus (strain SAFR-032), this protein is Acetyl-coenzyme A carboxylase carboxyl transferase subunit beta.